The following is a 309-amino-acid chain: Thiamine-monophosphate kinase (309 aa).

Residues Asp-41 and Asp-55 each contribute to the Mg(2+) site. His-62 contacts substrate. Asp-83, Asp-128, and Asp-215 together coordinate Mg(2+). 127-128 (GD) contacts ATP. Position 217 (Ser-217) interacts with ATP. Position 218 (Asp-218) interacts with Mg(2+). Glu-268 is a binding site for substrate.

Belongs to the thiamine-monophosphate kinase family.

The enzyme catalyses thiamine phosphate + ATP = thiamine diphosphate + ADP. It functions in the pathway cofactor biosynthesis; thiamine diphosphate biosynthesis; thiamine diphosphate from thiamine phosphate: step 1/1. In terms of biological role, catalyzes the ATP-dependent phosphorylation of thiamine-monophosphate (TMP) to form thiamine-pyrophosphate (TPP), the active form of vitamin B1. This Methanopyrus kandleri (strain AV19 / DSM 6324 / JCM 9639 / NBRC 100938) protein is Thiamine-monophosphate kinase.